Reading from the N-terminus, the 592-residue chain is Inactive heparanase-2 (592 aa).

The first 41 residues, 1-41 (MRVLCAFPEAMPSSNSRPPACLAPGALYLALLLHLSLSSQA), serve as a signal peptide directing secretion. N-linked (GlcNAc...) asparagine glycans are attached at residues Asn-254 and Asn-392.

It belongs to the glycosyl hydrolase 79 family. Interacts with HPSE. Interacts with SDC1 (via glycan chains). In terms of tissue distribution, widely expressed, with the highest expression in brain, mammary gland, prostate, small intestine, testis and uterus. In the central nervous system, expressed in the spinal cord, caudate nucleus, thalamus, substantia nigra, medulla oblongata, putamen and pons. In the urinary bladder, expressed in longitudinal and circular layers of detrusor muscle. Found both in normal and cancer tissues.

The protein localises to the secreted. Its subcellular location is the extracellular space. It localises to the extracellular matrix. In terms of biological role, binds heparin and heparan sulfate with high affinity, but lacks heparanase activity. Inhibits HPSE, possibly by competing for its substrates (in vitro). This is Inactive heparanase-2 (HPSE2) from Homo sapiens (Human).